A 185-amino-acid chain; its full sequence is Capsid protein (185 aa).

The segment at 136-185 is disordered; sequence NAPILSTLPETTVVRRRDRGRSPRRRTPSPRRRRSQSPRRRRSQSRESQC. Residues 149–178 are compositionally biased toward basic residues; the sequence is VRRRDRGRSPRRRTPSPRRRRSQSPRRRRS. Phosphoserine; by host is present on residues Ser-157, Ser-164, and Ser-172. The 1; half-length repeat unit spans residues 157–163; the sequence is SPRRRTP. Residues 157 to 179 form a 3 X 8 AA repeats of S-P-R-R-R-[PR]-S-Q region; it reads SPRRRTPSPRRRRSQSPRRRRSQ. The Bipartite nuclear localization signal motif lies at 160–177; it reads RRTPSPRRRRSQSPRRRR. A run of 2 repeats spans residues 164–171 and 172–179. Residues 179–185 are RNA binding; it reads QSRESQC.

This sequence belongs to the orthohepadnavirus core antigen family. As to quaternary structure, homodimerizes, then multimerizes. Interacts with cytosol exposed regions of viral L glycoprotein present in the reticulum-to-Golgi compartment. Interacts with human FLNB. Phosphorylated form interacts with host importin alpha; this interaction depends on the exposure of the NLS, which itself depends upon genome maturation and/or phosphorylation of the capsid protein. Interacts with host NUP153. Post-translationally, phosphorylated by host SRPK1, SRPK2, and maybe protein kinase C or GAPDH. Phosphorylation is critical for pregenomic RNA packaging. Protein kinase C phosphorylation is stimulated by HBx protein and may play a role in transport of the viral genome to the nucleus at the late step during the viral replication cycle.

The protein localises to the virion. The protein resides in the host cytoplasm. Functionally, self assembles to form an icosahedral capsid. Most capsids appear to be large particles with an icosahedral symmetry of T=4 and consist of 240 copies of capsid protein, though a fraction forms smaller T=3 particles consisting of 180 capsid proteins. Entering capsids are transported along microtubules to the nucleus. Phosphorylation of the capsid is thought to induce exposure of nuclear localization signal in the C-terminal portion of the capsid protein that allows binding to the nuclear pore complex via the importin (karyopherin-) alpha and beta. Capsids are imported in intact form through the nuclear pore into the nuclear basket, where it probably binds NUP153. Only capsids that contain the mature viral genome can release the viral DNA and capsid protein into the nucleoplasm. Immature capsids get stuck in the basket. Capsids encapsulate the pre-genomic RNA and the P protein. Pre-genomic RNA is reverse-transcribed into DNA while the capsid is still in the cytoplasm. The capsid can then either be directed to the nucleus, providing more genomes for transcription, or bud through the endoplasmic reticulum to provide new virions. The polypeptide is Capsid protein (Homo sapiens (Human)).